A 102-amino-acid polypeptide reads, in one-letter code: MNKARIKLTGTDPEKIADVCNQLKKIAERTGVDLSGPIPLPTKKLVVPTRKSPDGEGKATWEKWELRIHKRLVGIEADERAMRQVMKVNVPDNVSIEIELKA.

Belongs to the universal ribosomal protein uS10 family. In terms of assembly, part of the 30S ribosomal subunit.

Its function is as follows. Involved in the binding of tRNA to the ribosomes. The polypeptide is Small ribosomal subunit protein uS10 (Methanosphaera stadtmanae (strain ATCC 43021 / DSM 3091 / JCM 11832 / MCB-3)).